Here is a 320-residue protein sequence, read N- to C-terminus: Probable cell division protein WhiA (320 aa).

The H-T-H motif DNA-binding region spans 282 to 315 (TLKELGEMLSPAIGKSGVNHRLRKIDEIATKLQE).

The protein belongs to the WhiA family.

Involved in cell division and chromosome segregation. This chain is Probable cell division protein WhiA, found in Alkaliphilus oremlandii (strain OhILAs) (Clostridium oremlandii (strain OhILAs)).